A 35-amino-acid chain; its full sequence is MEALVYTFLLVSTLGIIFFAIFFREPPKVPDRGGK.

A helical membrane pass occupies residues 3–23 (ALVYTFLLVSTLGIIFFAIFF).

This sequence belongs to the PsbT family. PSII is composed of 1 copy each of membrane proteins PsbA, PsbB, PsbC, PsbD, PsbE, PsbF, PsbH, PsbI, PsbJ, PsbK, PsbL, PsbM, PsbT, PsbY, PsbZ, Psb30/Ycf12, at least 3 peripheral proteins of the oxygen-evolving complex and a large number of cofactors. It forms dimeric complexes.

Its subcellular location is the plastid. It localises to the chloroplast thylakoid membrane. Found at the monomer-monomer interface of the photosystem II (PS II) dimer, plays a role in assembly and dimerization of PSII. PSII is a light-driven water plastoquinone oxidoreductase, using light energy to abstract electrons from H(2)O, generating a proton gradient subsequently used for ATP formation. The protein is Photosystem II reaction center protein T of Taxus brevifolia (Pacific yew).